Consider the following 508-residue polypeptide: Photosystem II CP47 reaction center protein (508 aa).

Helical transmembrane passes span 21 to 36, 101 to 115, 140 to 156, 203 to 218, 237 to 252, and 457 to 472; these read AVHIMHTALVSGWAGS, IVFSGLCFLAAIWHW, GIHLFLAGVACFGFGAF, IAAGTLGILAGLFHLS, VLSSSIAAVFFAAFVV, and TFALLFFFGHIWHGAR.

This sequence belongs to the PsbB/PsbC family. PsbB subfamily. In terms of assembly, PSII is composed of 1 copy each of membrane proteins PsbA, PsbB, PsbC, PsbD, PsbE, PsbF, PsbH, PsbI, PsbJ, PsbK, PsbL, PsbM, PsbT, PsbX, PsbY, PsbZ, Psb30/Ycf12, at least 3 peripheral proteins of the oxygen-evolving complex and a large number of cofactors. It forms dimeric complexes. It depends on Binds multiple chlorophylls. PSII binds additional chlorophylls, carotenoids and specific lipids. as a cofactor.

It is found in the plastid. It localises to the chloroplast thylakoid membrane. One of the components of the core complex of photosystem II (PSII). It binds chlorophyll and helps catalyze the primary light-induced photochemical processes of PSII. PSII is a light-driven water:plastoquinone oxidoreductase, using light energy to abstract electrons from H(2)O, generating O(2) and a proton gradient subsequently used for ATP formation. The chain is Photosystem II CP47 reaction center protein from Agrostis stolonifera (Creeping bentgrass).